We begin with the raw amino-acid sequence, 395 residues long: Beta-1,4-galactosyltransferase 3 (395 aa).

Residues 1–10 (MLRRLLERPC) lie on the Cytoplasmic side of the membrane. A helical; Signal-anchor for type II membrane protein transmembrane segment spans residues 11–31 (TLALLVGSQLAVMMYLSLGGF). Over 32-395 (RSLSALFGRD…ANHTAPHGSH (364 aa)) the chain is Lumenal. The N-linked (GlcNAc...) asparagine glycan is linked to Asn-57. A disulfide bridge connects residues Cys-79 and Cys-121. 132–136 (PHRAR) lines the UDP-alpha-D-galactose pocket. A glycan (N-linked (GlcNAc...) asparagine) is linked at Asn-168. Residues 171 to 173 (FNR), 198 to 199 (VD), Tyr-228, and Trp-260 contribute to the UDP-alpha-D-galactose site. Cys-192 and Cys-211 are oxidised to a cystine. Position 199 (Asp-199) interacts with Mn(2+). 262–265 (GEDD) provides a ligand contact to N-acetyl-D-glucosamine. Residue His-293 participates in Mn(2+) binding. 293–295 (HRG) serves as a coordination point for UDP-alpha-D-galactose. Arg-305 provides a ligand contact to N-acetyl-D-glucosamine. N-linked (GlcNAc...) asparagine glycosylation is found at Asn-339 and Asn-387. The interval 341 to 395 (TADIGTDPRGPRAPSGPRYPPGSSQAFRQEMLQRRPPARPGPLPTANHTAPHGSH) is disordered.

The protein belongs to the glycosyltransferase 7 family. Mn(2+) serves as cofactor.

The protein localises to the golgi apparatus. The protein resides in the golgi stack membrane. The catalysed reaction is an N-acetyl-beta-D-glucosaminyl derivative + UDP-alpha-D-galactose = a beta-D-galactosyl-(1-&gt;4)-N-acetyl-beta-D-glucosaminyl derivative + UDP + H(+). It carries out the reaction N-acetyl-D-glucosamine + UDP-alpha-D-galactose = beta-D-galactosyl-(1-&gt;4)-N-acetyl-D-glucosamine + UDP + H(+). The enzyme catalyses a beta-D-GlcNAc-(1-&gt;3)-beta-D-Gal-(1-&gt;4)-beta-D-Glc-(1&lt;-&gt;1)-Cer(d18:1(4E)) + UDP-alpha-D-galactose = a neolactoside nLc4Cer(d18:1(4E)) + UDP + H(+). It catalyses the reaction a beta-D-glucosylceramide + UDP-alpha-D-galactose = a beta-D-galactosyl-(1-&gt;4)-beta-D-glucosyl-(1&lt;-&gt;1)-ceramide + UDP + H(+). The catalysed reaction is a neolactoside IV(3)-beta-GlcNAc-nLc4Cer + UDP-alpha-D-galactose = a neolactoside nLc6Cer + UDP + H(+). The protein operates within protein modification; protein glycosylation. Functionally, responsible for the synthesis of complex-type N-linked oligosaccharides in many glycoproteins as well as the carbohydrate moieties of glycolipids. The polypeptide is Beta-1,4-galactosyltransferase 3 (Rattus norvegicus (Rat)).